The chain runs to 159 residues: Regulatory protein RecX (159 aa).

The protein belongs to the RecX family.

It is found in the cytoplasm. Modulates RecA activity. The sequence is that of Regulatory protein RecX from Ralstonia pickettii (strain 12J).